The sequence spans 79 residues: Ixosin (79 aa).

A propeptide spans 1-56 (MSAHKVQIGLSSGQFRVALQVPSVRLKGLGSFHTGSIVLPSQGSLREDQISLHNQD) (removed in mature form).

Its function is as follows. Has antifungal activity against C.albicans. Has antibacterial activity against the Gram-positive bacterium S.aureus and the Gram-negative bacterium E.coli. Lacks hemolytic activity against rabbit erythrocytes. This is Ixosin from Ixodes sinensis (Hard tick).